A 468-amino-acid chain; its full sequence is Alcohol dehydrogenase (quinone), cytochrome c subunit (468 aa).

The first 23 residues, 1 to 23, serve as a signal peptide directing secretion; that stretch reads MINRLKVTFSAAAFSLLAGTALA. Cytochrome c domains lie at 31–134, 178–293, and 317–407; these read ALVQ…MHGV, PEIA…KSLP, and TASV…RTSW. 9 residues coordinate heme c: Cys-45, Cys-48, His-49, Cys-193, Cys-196, His-197, Cys-330, Cys-333, and His-334.

The alcohol dehydrogenase multicomponent enzyme system is composed of a dehydrogenase subunit I (AdhA) and a cytochrome c subunit II (AdhB). The cofactor is heme c.

It localises to the cell membrane. The catalysed reaction is ethanol + a ubiquinone = a ubiquinol + acetaldehyde. Cytochrome c component of the alcohol dehydrogenase multicomponent enzyme system which is involved in the production of acetic acid and in the ethanol oxidase respiratory chain. Quinohemoprotein alcohol dehydrogenase (ADH) catalyzes the oxidation of ethanol to acetaldehyde by transferring electrons to the ubiquinone embedded in the membrane phospholipids. The electrons transfer from ethanol to membranous ubiquinone occurs from pyrroloquinoline quinone (PQQ) to one heme c in subunit I (AdhA), and finally to two heme c in subunit II (AdhB). Besides ubiquinone reduction, ADH also has a ubiquinol (QH2) oxidation reaction which mediates electron transfer from ubiquinol to the non-energy generating bypass oxidase system. The electrons transfer occurs from ubiquinol (QH2) to the additional heme c within subunit II (AdhB). In Gluconacetobacter polyoxogenes (Acetobacter polyoxogenes), this protein is Alcohol dehydrogenase (quinone), cytochrome c subunit.